The following is an 830-amino-acid chain: WD repeat-containing protein 75 (830 aa).

9 WD repeats span residues 4–42 (EGVRVVRCGGSRLNFRRAVFSVDSKYIFCVSGDFVKVYS), 46–85 (EECVHILHGHTDLVSGILVNPSNHLQLYSCSFDGTIKLWD), 89–130 (GILI…QLVS), 144–183 (RQLTFVLDYINRSPKCIAFGNEGEYVAAVRDFYLSVYFFK), 192–230 (LPSTKNKKNAKNKFTCVACHPKEDCIASGHMDGKIRLWR), 236–275 (QKYTYTCLHWHHDMVMDLAFTVTGTSLLSGGRECVLVEWR), 278–317 (SEKNKEFLPRLGSSIEHISVSPAGDLFCTSHSDNKITVIH), 323–361 (SAVIQGLVKDRSISTGLMVDPRTKALVLNGKPGHLQFYS), and 375–422 (QQEY…KLWN). Lys426 is covalently cross-linked (Glycyl lysine isopeptide (Lys-Gly) (interchain with G-Cter in SUMO2)). 4 WD repeats span residues 429–473 (GFVL…KVWI), 486–524 (AWTCDFVGSYHKYQATNCCFSEDGSLLAVSFEEIVTIWD), 528–568 (WELK…CCWN), and 573–610 (SIQWSAKLNVRVMEPDPYSDHVAAVAQSSAGSDLFVFK). Phosphoserine is present on residues Ser663 and Ser671. Residue Lys675 forms a Glycyl lysine isopeptide (Lys-Gly) (interchain with G-Cter in SUMO2) linkage. Residues 761–807 (KSAEEVPDDVDMEGNKESDDSDEEYDLTEKDKETNNNTDLGEDAIHQ) are disordered. Phosphoserine occurs at positions 778 and 781. At Tyr785 the chain carries Phosphotyrosine. A Phosphoserine modification is found at Ser811.

As to quaternary structure, component of the proposed t-UTP subcomplex of the ribosomal small subunit (SSU) processome. SSU processome is composed of more than 70 proteins and the RNA chaperone small nucleolar RNA (snoRNA) U3.

It is found in the nucleus. It localises to the nucleolus. Ribosome biogenesis factor. Part of the small subunit (SSU) processome, first precursor of the small eukaryotic ribosomal subunit. During the assembly of the SSU processome in the nucleolus, many ribosome biogenesis factors, an RNA chaperone and ribosomal proteins associate with the nascent pre-rRNA and work in concert to generate RNA folding, modifications, rearrangements and cleavage as well as targeted degradation of pre-ribosomal RNA by the RNA exosome. Involved in nucleolar processing of pre-18S ribosomal RNA. Required for optimal pre-ribosomal RNA transcription by RNA polymerase I. The protein is WD repeat-containing protein 75 (Wdr75) of Mus musculus (Mouse).